Here is a 221-residue protein sequence, read N- to C-terminus: Deoxyribose-phosphate aldolase 1 (221 aa).

Aspartate 89 functions as the Proton donor/acceptor in the catalytic mechanism. The Schiff-base intermediate with acetaldehyde role is filled by lysine 152. Lysine 181 acts as the Proton donor/acceptor in catalysis.

Belongs to the DeoC/FbaB aldolase family. DeoC type 1 subfamily.

It localises to the cytoplasm. It catalyses the reaction 2-deoxy-D-ribose 5-phosphate = D-glyceraldehyde 3-phosphate + acetaldehyde. The protein operates within carbohydrate degradation; 2-deoxy-D-ribose 1-phosphate degradation; D-glyceraldehyde 3-phosphate and acetaldehyde from 2-deoxy-alpha-D-ribose 1-phosphate: step 2/2. Functionally, catalyzes a reversible aldol reaction between acetaldehyde and D-glyceraldehyde 3-phosphate to generate 2-deoxy-D-ribose 5-phosphate. In Oceanobacillus iheyensis (strain DSM 14371 / CIP 107618 / JCM 11309 / KCTC 3954 / HTE831), this protein is Deoxyribose-phosphate aldolase 1.